The sequence spans 133 residues: Large ribosomal subunit protein bL20 (133 aa).

The protein belongs to the bacterial ribosomal protein bL20 family.

Its function is as follows. Binds directly to 23S ribosomal RNA and is necessary for the in vitro assembly process of the 50S ribosomal subunit. It is not involved in the protein synthesizing functions of that subunit. In Bartonella tribocorum (strain CIP 105476 / IBS 506), this protein is Large ribosomal subunit protein bL20.